A 524-amino-acid chain; its full sequence is Chromosomal replication initiator protein DnaA (524 aa).

The interval 1–72 (MNDFWQHCSA…DLARDFWNAP (72 aa)) is domain I, interacts with DnaA modulators. The interval 72 to 187 (PIEVQFVLDP…GEADSMYERS (116 aa)) is domain II. The tract at residues 188–404 (KLNPVLTFDN…GALRKILAYS (217 aa)) is domain III, AAA+ region. Residues G232, G234, K235, and T236 each coordinate ATP. The segment at 405–524 (KFHGREISIE…LHVLEQTLKG (120 aa)) is domain IV, binds dsDNA.

Belongs to the DnaA family. As to quaternary structure, oligomerizes as a right-handed, spiral filament on DNA at oriC.

Its subcellular location is the cytoplasm. Plays an essential role in the initiation and regulation of chromosomal replication. ATP-DnaA binds to the origin of replication (oriC) to initiate formation of the DNA replication initiation complex once per cell cycle. Binds the DnaA box (a 9 base pair repeat at the origin) and separates the double-stranded (ds)DNA. Forms a right-handed helical filament on oriC DNA; dsDNA binds to the exterior of the filament while single-stranded (ss)DNA is stabiized in the filament's interior. The ATP-DnaA-oriC complex binds and stabilizes one strand of the AT-rich DNA unwinding element (DUE), permitting loading of DNA polymerase. After initiation quickly degrades to an ADP-DnaA complex that is not apt for DNA replication. Binds acidic phospholipids. The protein is Chromosomal replication initiator protein DnaA of Burkholderia multivorans (strain ATCC 17616 / 249).